Here is a 442-residue protein sequence, read N- to C-terminus: Glutamate--methylamine ligase (442 aa).

Positions asparagine 13–lysine 97 constitute a GS beta-grasp domain. Residues threonine 103 to phenylalanine 442 form the GS catalytic domain.

This sequence belongs to the glutamine synthetase family. Type 3 subfamily. It depends on Mg(2+) as a cofactor.

The enzyme catalyses methylamine + L-glutamate + ATP = N(5)-methyl-L-glutamine + ADP + phosphate + H(+). In terms of biological role, catalyzes the formation of N(5)-methyl-L-glutamine from glutamate and methylamine. The sequence is that of Glutamate--methylamine ligase from Methyloversatilis universalis (strain ATCC BAA-1314 / DSM 25237 / JCM 13912 / CCUG 52030 / FAM5).